We begin with the raw amino-acid sequence, 430 residues long: uncharacterized protein (430 aa).

Transmembrane regions (helical) follow at residues 18 to 38 (LFLL…NTFV), 49 to 69 (FIDL…TFYL), 80 to 100 (VFIL…VLLA), 109 to 129 (VLIG…FNVL), 145 to 165 (FMGI…GFVI), 175 to 195 (TVIF…SFFL), 235 to 255 (IFVF…LALG), 256 to 276 (TFGL…SRLI), 285 to 305 (ILLG…HMSF), 307 to 327 (TLLT…VPYV), 353 to 373 (MFLN…VALL), and 377 to 397 (VGIP…YYFV). Residues 407–430 (GENETMEEDGQKRVTEPTLLKGER) form a disordered region. The segment covering 415–430 (DGQKRVTEPTLLKGER) has biased composition (basic and acidic residues).

It localises to the cell membrane. This is an uncharacterized protein from Bacillus subtilis (strain 168).